The primary structure comprises 544 residues: Chaperonin GroEL (544 aa).

Residues T30–P33, K51, D87–T91, G415, and D495 contribute to the ATP site.

This sequence belongs to the chaperonin (HSP60) family. As to quaternary structure, forms a cylinder of 14 subunits composed of two heptameric rings stacked back-to-back. Interacts with the co-chaperonin GroES.

The protein resides in the cell outer membrane. The enzyme catalyses ATP + H2O + a folded polypeptide = ADP + phosphate + an unfolded polypeptide.. Functionally, together with its co-chaperonin GroES, plays an essential role in assisting protein folding. The GroEL-GroES system forms a nano-cage that allows encapsulation of the non-native substrate proteins and provides a physical environment optimized to promote and accelerate protein folding. The sequence is that of Chaperonin GroEL from Neisseria gonorrhoeae.